A 414-amino-acid polypeptide reads, in one-letter code: Gamma-glutamyl phosphate reductase (414 aa).

The protein belongs to the gamma-glutamyl phosphate reductase family.

Its subcellular location is the cytoplasm. The enzyme catalyses L-glutamate 5-semialdehyde + phosphate + NADP(+) = L-glutamyl 5-phosphate + NADPH + H(+). Its pathway is amino-acid biosynthesis; L-proline biosynthesis; L-glutamate 5-semialdehyde from L-glutamate: step 2/2. In terms of biological role, catalyzes the NADPH-dependent reduction of L-glutamate 5-phosphate into L-glutamate 5-semialdehyde and phosphate. The product spontaneously undergoes cyclization to form 1-pyrroline-5-carboxylate. This is Gamma-glutamyl phosphate reductase from Clostridium beijerinckii (strain ATCC 51743 / NCIMB 8052) (Clostridium acetobutylicum).